Here is a 675-residue protein sequence, read N- to C-terminus: Alpha-1,4-glucan:maltose-1-phosphate maltosyltransferase 1 (675 aa).

Residues K264, Q324, and D359 each contribute to the alpha-maltose 1-phosphate site. D394 (nucleophile) is an active-site residue. N395 lines the alpha-maltose 1-phosphate pocket. Catalysis depends on E423, which acts as the Proton donor. 534-535 (KY) contacts alpha-maltose 1-phosphate.

This sequence belongs to the glycosyl hydrolase 13 family. GlgE subfamily. In terms of assembly, homodimer.

It catalyses the reaction alpha-maltose 1-phosphate + [(1-&gt;4)-alpha-D-glucosyl](n) = [(1-&gt;4)-alpha-D-glucosyl](n+2) + phosphate. With respect to regulation, is competitively inhibited by alpha-, beta- and gamma-cyclodextrins (cyclic maltooligosaccharides), unlike GlgE from M.tuberculosis. In terms of biological role, maltosyltransferase that uses maltose 1-phosphate (M1P) as the sugar donor to elongate linear or branched alpha-(1-&gt;4)-glucans. Maltooligosaccharides with a degree of polymerization (DP) superior or equal to 4 are efficient acceptors, with DP6 being optimal in the GlgE-catalyzed polymerization with M1P. Is specific for the alpha-anomer of M1P as substrate, since the beta-anomer of M1P gives no activity. Alpha-D-glucose 1-phosphate cannot serve as a donor substrate, but alpha-maltosyl fluoride is an efficient donor in vitro. Exhibits an alpha-retaining catalytic mechanism, with evidence that maltooligosaccharide acceptors are extended at their non-reducing ends. Is also able to catalyze the reverse reaction in vitro, releasing M1P from glycogen or maltoheptaose in the presence of inorganic phosphate. Also catalyzes disproportionation reactions through maltosyl transfer between maltooligosaccharides. Is probably involved in a branched alpha-glucan biosynthetic pathway from trehalose, together with TreS, Mak and GlgB. The protein is Alpha-1,4-glucan:maltose-1-phosphate maltosyltransferase 1 (glgE1) of Streptomyces coelicolor (strain ATCC BAA-471 / A3(2) / M145).